We begin with the raw amino-acid sequence, 3063 residues long: Collagen alpha-1(XII) chain (3063 aa).

Positions 1–23 (MRSRLPPALAALGAALLLSSIEA) are cleaved as a signal peptide. In terms of domain architecture, Fibronectin type-III 1 spans 27 to 117 (PPSDLNFKII…GQLTIQTGSS (91 aa)). The 177-residue stretch at 140 to 316 (DLVFLVDGSW…DIQNEIISQV (177 aa)) folds into the VWFA 1 domain. The O-linked (Xyl...) (chondroitin sulfate) serine glycan is linked to Ser329. Residues 336–426 (PPSNLIAMEV…SIMEKTQPMK (91 aa)) form the Fibronectin type-III 2 domain. In terms of domain architecture, VWFA 2 spans 440–616 (DIVFLVDGSY…RISFELTQSI (177 aa)). Fibronectin type-III domains follow at residues 634 to 722 (PPKD…TEEV), 725 to 816 (APRN…VRGN), 817 to 905 (PRDL…LEER), 907 to 998 (SPQD…LSQD), 999 to 1087 (SKTL…ASRF), and 1089 to 1179 (SPRN…TLSD). A glycan (N-linked (GlcNAc...) asparagine) is linked at Asn700. Ser798 carries an O-linked (Xyl...) (chondroitin sulfate) serine glycan. Positions 799-830 (GPGTPLTGNAATEEVRGNPRDLRVSDPTTSTM) are disordered. A compositionally biased stretch (basic and acidic residues) spans 811–822 (EEVRGNPRDLRV). The Cell attachment site motif lies at 862 to 864 (RGD). O-linked (Xyl...) (chondroitin sulfate) serine glycans are attached at residues Ser889 and Ser981. The tract at residues 1077–1099 (RQGSGTTASRFKSPRNLKTSDPT) is disordered. Residues 1079–1099 (GSGTTASRFKSPRNLKTSDPT) are compositionally biased toward polar residues. One can recognise a VWFA 3 domain in the interval 1199 to 1371 (DIVLLVDGSW…ESLSRIVDDL (173 aa)). 10 consecutive Fibronectin type-III domains span residues 1387–1476 (APSN…LPVP), 1477–1567 (VVSL…LPLP), 1568–1658 (RPQD…VPAP), 1659–1754 (TNLK…APKS), 1755–1849 (GPRN…TVRN), 1850–1935 (LRVY…LMRG), 1936–2026 (LARN…LPRS), 2027–2117 (GPRN…VGLL), 2118–2206 (PPQN…LYLN), and 2207–2294 (VTDL…TVKP). Residue Asn1763 is glycosylated (N-linked (GlcNAc...) asparagine). A glycan (N-linked (GlcNAc...) asparagine) is linked at Asn2206. The disordered stretch occupies residues 2283-2312 (GVSVKEHTTVKPTEAPTEPPTPPPPPTIPP). A compositionally biased stretch (pro residues) spans 2299–2311 (TEPPTPPPPPTIP). The region spanning 2323-2496 (DIVFLTDASW…ESFEKIEDNL (174 aa)) is the VWFA 4 domain. The nonhelical region (NC3) stretch occupies residues 2451-2746 (SGFSVFVVGV…NSCTCTQDSV (296 aa)). Positions 2520–2712 (GFKMLEAYNL…IQSFDIVCSP (193 aa)) constitute a Laminin G-like domain. Residues Asn2528 and Asn2679 are each glycosylated (N-linked (GlcNAc...) asparagine). 2 disordered regions span residues 2743–2896 (QDSV…GDRG) and 2932–3063 (NDYQ…PGSG). Collagen-like domains lie at 2747-2798 (GPPG…GPNG), 2802-2852 (PGEQ…AMGP), 2853-2898 (RGPP…RGDI), and 2941-2990 (PGPP…GERG). A triple-helical region (COL2) with 1 imperfection region spans residues 2747–2898 (GPPGPPGPAG…KGEKGDRGDI (152 aa)). The short motif at 2779–2781 (RGD) is the Cell attachment site element. A compositionally biased stretch (pro residues) spans 2784–2794 (PPGPQGPPGPQ). Residues 2817–2826 (PGLPGRTGTP) are compositionally biased toward low complexity. 2 stretches are compositionally biased toward pro residues: residues 2828–2837 (LPGPPGPMGP) and 2853–2862 (RGPPGPPGSP). Low complexity predominate over residues 2864–2874 (SPGVTGPSGKP). The short motif at 2895–2897 (RGD) is the Cell attachment site element. The tract at residues 2899–2941 (ASQNMMRAVARQVCEQLISGQMNRFNQMLNQIPNDYQSSRNQP) is nonhelical region (NC2). A compositionally biased stretch (pro residues) spans 2941 to 2950 (PGPPGPPGPP). The tract at residues 2942-3044 (GPPGPPGPPG…RGPPGPPGYC (103 aa)) is triple-helical region (COL1) with 2 imperfections. 14 positions are modified to 4-hydroxyproline: Pro2944, Pro2947, Pro2950, Pro2959, Pro2965, Pro2968, Pro2971, Pro2983, Pro3000, Pro3003, Pro3014, Pro3023, Pro3026, and Pro3029. Residues 2957 to 2966 (GEPGPGGRPG) show a composition bias toward gly residues. Residues 3006 to 3020 (QGESRTGPPGSTGSR) are compositionally biased toward low complexity. Residues 3045 to 3063 (DSSQCASIPYNGQGYPGSG) are nonhelical region (NC1).

This sequence belongs to the fibril-associated collagens with interrupted helices (FACIT) family. Trimer of identical chains each containing 190 kDa of non-triple-helical sequences. The triple-helical tail is stabilized by disulfide bonds at each end. Post-translationally, hydroxylation on proline residues within the sequence motif, GXPG, is most likely to be 4-hydroxy as this fits the requirement for 4-hydroxylation in vertebrates. In terms of processing, isoform 1 O-glycosylation; glycosaminoglycan of chondroitin-sulfate type. In terms of tissue distribution, found in collagen I-containing tissues: both isoform 1 and isoform 2 appear in amnion, chorion, skeletal muscle, small intestine, and in cell culture of dermal fibroblasts, keratinocytes and endothelial cells. Only isoform 2 is found in lung, placenta, kidney and a squamous cell carcinoma cell line. Isoform 1 is also present in the corneal epithelial Bowman's membrane (BM) and the interfibrillar matrix of the corneal stroma, but it is not detected in the limbal BM.

Its subcellular location is the secreted. The protein resides in the extracellular space. It is found in the extracellular matrix. In terms of biological role, type XII collagen interacts with type I collagen-containing fibrils, the COL1 domain could be associated with the surface of the fibrils, and the COL2 and NC3 domains may be localized in the perifibrillar matrix. This Homo sapiens (Human) protein is Collagen alpha-1(XII) chain (COL12A1).